A 609-amino-acid polypeptide reads, in one-letter code: Cell division protein DipM (609 aa).

A signal peptide spans 1 to 24 (MRQLWTQAAVIALTAGTLGAPAHA). A disordered region spans residues 21–103 (PAHASGQSGQ…PVLRATPPRT (83 aa)). Over residues 25–38 (SGQSGQRFTPNFPI) the composition is skewed to polar residues. A compositionally biased stretch (pro residues) spans 79-93 (LPPPAPVSTPAPAPQ). LysM domains are found at residues 121-165 (QVRV…KIKG) and 171-215 (KAYV…KLLL). Low complexity-rich tracts occupy residues 242–258 (AEPAPATTRPATPAATP) and 265–280 (PVSEETSEPATTSTTT). Residues 242–280 (AEPAPATTRPATPAATPSRPVRQPVSEETSEPATTSTTT) are disordered. LysM domains lie at 295–339 (QVHT…KIKG) and 345–389 (KAYS…KIAL). Positions 389 to 457 (LPDGFRDKGP…AAQPITPPPS (69 aa)) are disordered. Over residues 400–429 (RTTTTTRPATPPANTYARVDSSAAAASTPS) the composition is skewed to low complexity. Residues 503–603 (NDGLNIRAPQ…VKDKAKPVDP (101 aa)) form a lytM region.

The protein localises to the periplasm. In terms of biological role, required for efficient cell division, cell polarity and normal cell morphology. Facilitates remodeling of the peptidoglycan layer and, thus, coordinated constriction of the cell envelope during the division process. Plays a critical role in maintaining proper cell envelope architecture during growth and division. Required for normal envelope invagination during cell division and to establish or maintain outer membrane connections throughout the cell envelope. May serve as a regulatory hub coordinating the activities of multiple peptidoglycan-degrading enzymes during cell constriction. Required to position SdpA and SdpB at midcell. The protein is Cell division protein DipM of Caulobacter vibrioides (strain NA1000 / CB15N) (Caulobacter crescentus).